The sequence spans 907 residues: Probable dipeptidyl-aminopeptidase B (907 aa).

The span at 1–11 shows a compositional bias: basic and acidic residues; that stretch reads MYDQVPYRDTD. Positions 1–71 are disordered; it reads MYDQVPYRDT…RGKPDEDDDL (71 aa). At 1–88 the chain is on the cytoplasmic side; sequence MYDQVPYRDT…LKPMERKVRR (88 aa). Residues 22-36 are compositionally biased toward low complexity; it reads SDSNRSSIDTTSTTS. A helical; Signal-anchor for type II membrane protein transmembrane segment spans residues 89-109; the sequence is AMYLLAFLMIGGWFLALAVYV. At 110–907 the chain is on the vacuolar side; the sequence is SREHFGTPDT…PLRKRNRELV (798 aa). N185 and N341 each carry an N-linked (GlcNAc...) asparagine glycan. S746 serves as the catalytic Charge relay system. The N-linked (GlcNAc...) asparagine glycan is linked to N800. Residues D823 and H856 each act as charge relay system in the active site.

Belongs to the peptidase S9B family.

The protein localises to the vacuole membrane. The enzyme catalyses Release of an N-terminal dipeptide, Xaa-Yaa-|-Zaa-, from a polypeptide, preferentially when Yaa is Pro, provided Zaa is neither Pro nor hydroxyproline.. Type IV dipeptidyl-peptidase which removes N-terminal dipeptides sequentially from polypeptides having unsubstituted N-termini provided that the penultimate residue is proline. This Tuber melanosporum (strain Mel28) (Perigord black truffle) protein is Probable dipeptidyl-aminopeptidase B (DAPB).